Here is a 167-residue protein sequence, read N- to C-terminus: Phosphopantetheine adenylyltransferase (167 aa).

T10 contributes to the substrate binding site. ATP is bound by residues T10–F11 and H18. Substrate-binding residues include A77 and R91. ATP is bound by residues G92 to R94, E102, and Y127 to S133.

Belongs to the bacterial CoaD family. Homohexamer. The cofactor is Mg(2+).

It localises to the cytoplasm. It catalyses the reaction (R)-4'-phosphopantetheine + ATP + H(+) = 3'-dephospho-CoA + diphosphate. It functions in the pathway cofactor biosynthesis; coenzyme A biosynthesis; CoA from (R)-pantothenate: step 4/5. Reversibly transfers an adenylyl group from ATP to 4'-phosphopantetheine, yielding dephospho-CoA (dPCoA) and pyrophosphate. The polypeptide is Phosphopantetheine adenylyltransferase (Thermomicrobium roseum (strain ATCC 27502 / DSM 5159 / P-2)).